A 443-amino-acid chain; its full sequence is Tol-Pal system protein TolB (443 aa).

Residues 1–33 form the signal peptide; it reads MKIGIINTKIRTVFSAFACMIAASLVCTMPARA.

Belongs to the TolB family. As to quaternary structure, the Tol-Pal system is composed of five core proteins: the inner membrane proteins TolA, TolQ and TolR, the periplasmic protein TolB and the outer membrane protein Pal. They form a network linking the inner and outer membranes and the peptidoglycan layer.

The protein resides in the periplasm. Functionally, part of the Tol-Pal system, which plays a role in outer membrane invagination during cell division and is important for maintaining outer membrane integrity. This is Tol-Pal system protein TolB from Brucella suis biovar 1 (strain 1330).